The following is a 90-amino-acid chain: Acylphosphatase (90 aa).

Positions 3–90 (QRQFTVYGCV…RVFSDFTIER (88 aa)) constitute an Acylphosphatase-like domain. Catalysis depends on residues Arg-18 and Asn-36.

It belongs to the acylphosphatase family.

It carries out the reaction an acyl phosphate + H2O = a carboxylate + phosphate + H(+). In Actinobacillus succinogenes (strain ATCC 55618 / DSM 22257 / CCUG 43843 / 130Z), this protein is Acylphosphatase (acyP).